A 194-amino-acid polypeptide reads, in one-letter code: Peptidyl-tRNA hydrolase (194 aa).

Y16 contributes to the tRNA binding site. H21 serves as the catalytic Proton acceptor. Residues F67, N69, and N115 each contribute to the tRNA site.

It belongs to the PTH family. As to quaternary structure, monomer.

It localises to the cytoplasm. The catalysed reaction is an N-acyl-L-alpha-aminoacyl-tRNA + H2O = an N-acyl-L-amino acid + a tRNA + H(+). Its function is as follows. Hydrolyzes ribosome-free peptidyl-tRNAs (with 1 or more amino acids incorporated), which drop off the ribosome during protein synthesis, or as a result of ribosome stalling. Catalyzes the release of premature peptidyl moieties from peptidyl-tRNA molecules trapped in stalled 50S ribosomal subunits, and thus maintains levels of free tRNAs and 50S ribosomes. This chain is Peptidyl-tRNA hydrolase, found in Shigella flexneri.